The sequence spans 445 residues: GTPase Der (445 aa).

EngA-type G domains follow at residues 3-167 and 180-353; these read PVIA…YAGQ and IKIA…AAAM. GTP-binding positions include 9–16, 56–60, 119–122, 186–193, 233–237, and 298–301; these read GRPNVGKS, DTGGF, NKAE, DTAGL, and NKWD. One can recognise a KH-like domain in the interval 354 to 438; the sequence is AKLPTPKLTR…PLRIEFRSSN (85 aa).

Belongs to the TRAFAC class TrmE-Era-EngA-EngB-Septin-like GTPase superfamily. EngA (Der) GTPase family. In terms of assembly, associates with the 50S ribosomal subunit.

Functionally, GTPase that plays an essential role in the late steps of ribosome biogenesis. The chain is GTPase Der from Burkholderia vietnamiensis (strain G4 / LMG 22486) (Burkholderia cepacia (strain R1808)).